Here is a 192-residue protein sequence, read N- to C-terminus: Adenylate kinase (192 aa).

ATP is bound at residue 12–17 (GSGKTT). Residues 34-63 (STGDLLRAQVASGSELGKTIDSFISKGNLV) are NMP. AMP is bound by residues Thr35, Arg40, 61–63 (NLV), 88–91 (GYPR), and Gln95. An LID region spans residues 130–136 (GRNRGAD). Position 131 (Arg131) interacts with ATP. The AMP site is built by Arg133 and Arg145. Arg173 lines the ATP pocket.

The protein belongs to the adenylate kinase family. Monomer.

It is found in the cytoplasm. It carries out the reaction AMP + ATP = 2 ADP. It participates in purine metabolism; AMP biosynthesis via salvage pathway; AMP from ADP: step 1/1. In terms of biological role, catalyzes the reversible transfer of the terminal phosphate group between ATP and AMP. Plays an important role in cellular energy homeostasis and in adenine nucleotide metabolism. This is Adenylate kinase from Campylobacter jejuni subsp. doylei (strain ATCC BAA-1458 / RM4099 / 269.97).